A 97-amino-acid chain; its full sequence is Co-chaperonin GroES (97 aa).

It belongs to the GroES chaperonin family. Heptamer of 7 subunits arranged in a ring. Interacts with the chaperonin GroEL.

It localises to the cytoplasm. Functionally, together with the chaperonin GroEL, plays an essential role in assisting protein folding. The GroEL-GroES system forms a nano-cage that allows encapsulation of the non-native substrate proteins and provides a physical environment optimized to promote and accelerate protein folding. GroES binds to the apical surface of the GroEL ring, thereby capping the opening of the GroEL channel. The polypeptide is Co-chaperonin GroES (Photorhabdus laumondii subsp. laumondii (strain DSM 15139 / CIP 105565 / TT01) (Photorhabdus luminescens subsp. laumondii)).